A 453-amino-acid polypeptide reads, in one-letter code: UDP-glycosyltransferase 76E9 (453 aa).

UDP-alpha-D-glucose contacts are provided by residues Ser279, 337 to 339 (APQ), 354 to 362 (HCGWNSTLE), and 376 to 379 (TTDQ).

The protein belongs to the UDP-glycosyltransferase family.

The polypeptide is UDP-glycosyltransferase 76E9 (UGT76E9) (Arabidopsis thaliana (Mouse-ear cress)).